The primary structure comprises 407 residues: tRNA (guanine(26)-N(2))-dimethyltransferase (407 aa).

The Trm1 methyltransferase domain occupies 10–400 (AVTHEGRSII…APWGEVLEAV (391 aa)). S-adenosyl-L-methionine-binding residues include arginine 50, arginine 82, aspartate 99, and glutamate 128.

This sequence belongs to the class I-like SAM-binding methyltransferase superfamily. Trm1 family.

The enzyme catalyses guanosine(26) in tRNA + 2 S-adenosyl-L-methionine = N(2)-dimethylguanosine(26) in tRNA + 2 S-adenosyl-L-homocysteine + 2 H(+). Dimethylates a single guanine residue at position 26 of a number of tRNAs using S-adenosyl-L-methionine as donor of the methyl groups. The protein is tRNA (guanine(26)-N(2))-dimethyltransferase of Aeropyrum pernix (strain ATCC 700893 / DSM 11879 / JCM 9820 / NBRC 100138 / K1).